The primary structure comprises 251 residues: Adenosine 5'-phosphosulfate reductase (251 aa).

Cysteine 121, cysteine 122, cysteine 204, and cysteine 207 together coordinate [4Fe-4S] cluster. The active-site Nucleophile; cysteine thiosulfonate intermediate is cysteine 232.

This sequence belongs to the PAPS reductase family. CysH subfamily. The cofactor is [4Fe-4S] cluster.

The protein resides in the cytoplasm. The enzyme catalyses [thioredoxin]-disulfide + sulfite + AMP + 2 H(+) = adenosine 5'-phosphosulfate + [thioredoxin]-dithiol. The protein operates within sulfur metabolism; hydrogen sulfide biosynthesis; sulfite from sulfate. In terms of biological role, catalyzes the formation of sulfite from adenosine 5'-phosphosulfate (APS) using thioredoxin as an electron donor. The polypeptide is Adenosine 5'-phosphosulfate reductase (Sinorhizobium fredii (strain NBRC 101917 / NGR234)).